Here is a 401-residue protein sequence, read N- to C-terminus: Membrane protein UL43 homolog (401 aa).

Helical transmembrane passes span 43-63 (FVGI…IDLL), 67-87 (STCL…RVPI), 93-113 (IVTV…SVWV), 124-144 (LIVV…ISLF), 159-179 (ASLL…LVEL), 182-202 (VPIG…FGLA), 259-279 (PGVI…WIVL), 294-314 (YVVF…QLVI), 332-352 (AVCM…SLAF), and 379-399 (ISRW…ATII).

Belongs to the alphaherpesvirinae HHV-1 UL43 family.

The protein resides in the membrane. This chain is Membrane protein UL43 homolog, found in Equine herpesvirus 1 (strain Ab4p) (EHV-1).